Here is a 279-residue protein sequence, read N- to C-terminus: Undecaprenyl-diphosphatase (279 aa).

6 helical membrane-spanning segments follow: residues 45 to 65 (FVEM…IVIY), 85 to 105 (WQLW…ALPF), 113 to 133 (FNFM…FIWV), 188 to 208 (SVAA…YSGL), 226 to 246 (LILL…IRFL), and 255 to 275 (FTIF…YWLV).

Belongs to the UppP family.

Its subcellular location is the cell membrane. It carries out the reaction di-trans,octa-cis-undecaprenyl diphosphate + H2O = di-trans,octa-cis-undecaprenyl phosphate + phosphate + H(+). Catalyzes the dephosphorylation of undecaprenyl diphosphate (UPP). Confers resistance to bacitracin. This is Undecaprenyl-diphosphatase from Streptococcus agalactiae serotype Ia (strain ATCC 27591 / A909 / CDC SS700).